Here is a 256-residue protein sequence, read N- to C-terminus: Hypodermin-B (256 aa).

Positions 1–22 are cleaved as a signal peptide; that stretch reads MLKFVILVCSVACVFGAVVPGG. A propeptide spans 23-30 (activation peptide); that stretch reads MLPQLDGR. The Peptidase S1 domain maps to 31–254; it reads IVGGFEADIE…VRSWITENAK (224 aa). A disulfide bridge connects residues cysteine 56 and cysteine 72. Residues histidine 71 and aspartate 116 each act as charge relay system in the active site. Intrachain disulfides connect cysteine 180/cysteine 197 and cysteine 206/cysteine 230. Serine 210 acts as the Charge relay system in catalysis.

This sequence belongs to the peptidase S1 family.

The protein resides in the secreted. Its function is as follows. Protease that shows preferential cleavage after Arg and Lys residues. The sequence is that of Hypodermin-B from Hypoderma lineatum (Early cattle grub).